Consider the following 203-residue polypeptide: dATP triphosphohydrolase (203 aa).

R17 lines the dATP pocket. H31, H73, D74, E77, D82, and D130 together coordinate Co(2+).

It belongs to the Caudovirales dATP triphosphohydrolase family. Co(2+) is required as a cofactor.

It catalyses the reaction dATP + H2O = 2'-deoxyadenosine + triphosphate + H(+). It carries out the reaction dADP + H2O = 2'-deoxyadenosine + diphosphate. The catalysed reaction is dAMP + H2O = 2'-deoxyadenosine + phosphate. Catalyzes the hydrolysis of dATP, dADP and dAMP into dA. This step is essential for Z-genome synthesis (containing aminoadenine instead of adenine). Specifically removes dATP and its precursor dADP from the nucleotide pool of the host, preventing the incorporation of A into the phage genome and favoring the integration of the Z-base into the viral genome. The sequence is that of dATP triphosphohydrolase (datZ) from Acinetobacter phage SH-Ab 15497.